Consider the following 596-residue polypeptide: MKHIRNFSIIAHIDHGKSTLSDRLIQVCGGLSDREMAAQVLDSMDLERERGITIKAQSVTLDYHAKDGNTYQLNFIDTPGHVDFSYEVSRSLAACEGALLVVDAGQGVEAQTLANCYTALEMNLDVVPVLNKIDLPQAEPERVALEIEDIVGIEAINAVRCSAKTGIGVEDVLEEIVAKIPPPVGDETAPLQALIIDSWFDAYLGVVSLVRIKHGVLKKGEKFKVMSTGQNYNADRVGIFTPKEKDKLELRAGEVGYVISGIKEIHGAPVGDTLTHAKHGADKPLPGFKKVKPQVYAGVFPISTDEYENFRDALNKLSLNDASLFFEPETSSALGFGFRIGYLGLLHMEIVQERLEREYNLDLITTAPTVVYEVVMTNGDIVYVDNPSDLPALNNIDEIHEPIVEANILVPKEYLGNVITLCIEKRGSQTNMVYHGNQVAVTYHLPMAEVVMDFFDRLKSTSRGYASLEYNFIRFDPADMVRLDILINGDRVDALAMIIHRSNIRHRGLALVEKMKELIPRQMFDIAIQAAVGSQIIARSTIKALRKDVTAKCYGGDVSRKKKLLNKQKEGKKRMKQVGNVEVPQEAFLAVLKLND.

In terms of domain architecture, tr-type G spans 2–184 (KHIRNFSIIA…EIVAKIPPPV (183 aa)). Residues 14 to 19 (DHGKST) and 131 to 134 (NKID) each bind GTP.

The protein belongs to the TRAFAC class translation factor GTPase superfamily. Classic translation factor GTPase family. LepA subfamily.

Its subcellular location is the cell inner membrane. The catalysed reaction is GTP + H2O = GDP + phosphate + H(+). Functionally, required for accurate and efficient protein synthesis under certain stress conditions. May act as a fidelity factor of the translation reaction, by catalyzing a one-codon backward translocation of tRNAs on improperly translocated ribosomes. Back-translocation proceeds from a post-translocation (POST) complex to a pre-translocation (PRE) complex, thus giving elongation factor G a second chance to translocate the tRNAs correctly. Binds to ribosomes in a GTP-dependent manner. The protein is Elongation factor 4 of Shewanella denitrificans (strain OS217 / ATCC BAA-1090 / DSM 15013).